A 189-amino-acid chain; its full sequence is uncharacterized protein (189 aa).

One can recognise an HTH tetR-type domain in the interval 9 to 69 (ADTGGRILRA…SMLTSHIAAV (61 aa)). Positions 32–51 (TLAEIARRAGVSRPTVYRRW) form a DNA-binding region, H-T-H motif.

This is an uncharacterized protein from Mycobacterium bovis (strain ATCC BAA-935 / AF2122/97).